A 177-amino-acid chain; its full sequence is Cytochrome c-type biogenesis protein CcmE (177 aa).

The Cytoplasmic segment spans residues 1-7 (MTRKSRR). A helical; Signal-anchor for type II membrane protein transmembrane segment spans residues 8–28 (LILIAACGAVLALALGLILSA). Residues 29–177 (MSGSIVFFRS…DATLGQRSER (149 aa)) lie on the Periplasmic side of the membrane. Heme contacts are provided by H122 and Y126. The tract at residues 133 to 177 (DALKAQGRWQEGGSKEAPKDASKAAPKDAAKPETADATLGQRSER) is disordered. Residues 145–166 (GSKEAPKDASKAAPKDAAKPET) are compositionally biased toward basic and acidic residues.

This sequence belongs to the CcmE/CycJ family.

The protein resides in the cell inner membrane. Heme chaperone required for the biogenesis of c-type cytochromes. Transiently binds heme delivered by CcmC and transfers the heme to apo-cytochromes in a process facilitated by CcmF and CcmH. The chain is Cytochrome c-type biogenesis protein CcmE from Methylorubrum extorquens (strain PA1) (Methylobacterium extorquens).